Reading from the N-terminus, the 183-residue chain is D-glycero-alpha-D-manno-heptose-1,7-bisphosphate 7-phosphatase (183 aa).

Zn(2+)-binding residues include C93, H95, C108, and C110.

Belongs to the GmhB family.

It is found in the cytoplasm. The enzyme catalyses D-glycero-alpha-D-manno-heptose 1,7-bisphosphate + H2O = D-glycero-alpha-D-manno-heptose 1-phosphate + phosphate. The protein operates within nucleotide-sugar biosynthesis; GDP-D-glycero-alpha-D-manno-heptose biosynthesis; GDP-D-glycero-alpha-D-manno-heptose from D-glycero-alpha-D-manno-heptose 7-phosphate: step 2/3. Its function is as follows. Converts the D-glycero-alpha-D-manno-heptose 1,7-bisphosphate intermediate into D-glycero-alpha-D-manno-heptose 1-phosphate by removing the phosphate group at the C-7 position. The polypeptide is D-glycero-alpha-D-manno-heptose-1,7-bisphosphate 7-phosphatase (gmhB2) (Photorhabdus laumondii subsp. laumondii (strain DSM 15139 / CIP 105565 / TT01) (Photorhabdus luminescens subsp. laumondii)).